The following is a 174-amino-acid chain: Endoribonuclease YbeY (174 aa).

Residues His-129, His-133, and His-139 each contribute to the Zn(2+) site.

Belongs to the endoribonuclease YbeY family. Zn(2+) serves as cofactor.

The protein localises to the cytoplasm. In terms of biological role, single strand-specific metallo-endoribonuclease involved in late-stage 70S ribosome quality control and in maturation of the 3' terminus of the 16S rRNA. The sequence is that of Endoribonuclease YbeY from Lactobacillus acidophilus (strain ATCC 700396 / NCK56 / N2 / NCFM).